The sequence spans 542 residues: Probable E3 ubiquitin-protein ligase ARI11 (542 aa).

Positions 1 to 25 (MSSSDRDIIDIESGEEDLYSDGGND) are disordered. The segment covering 10-19 (DIESGEEDLY) has biased composition (acidic residues). Residues 135 to 342 (VDIQCGICFE…SDHKACNAFK (208 aa)) are TRIAD supradomain. Zn(2+)-binding residues include Cys-139, Cys-142, Cys-156, His-158, Cys-161, Cys-164, Cys-184, Cys-189, Cys-228, Cys-233, Cys-251, Cys-253, Cys-258, Cys-261, His-266, Cys-271, Cys-298, and Cys-301. An RING-type 1 zinc finger spans residues 139–189 (CGICFESYTRKEIARVSCGHPYCKTCWTGYITTKIEDGPGCLRVKCPEPSC). An IBR-type zinc finger spans residues 208–271 (DKYYRYFLRS…CEDAHSPVDC (64 aa)). Residues 298–328 (CPKCKRPIEKNTGCNHMSCSAPCRHYFCWAC) form an RING-type 2; atypical zinc finger. Residue Cys-311 is part of the active site. Residues Cys-316, Cys-320, Cys-325, Cys-328, His-335, and Cys-338 each contribute to the Zn(2+) site.

This sequence belongs to the RBR family. Ariadne subfamily. Requires Zn(2+) as cofactor.

It catalyses the reaction [E2 ubiquitin-conjugating enzyme]-S-ubiquitinyl-L-cysteine + [acceptor protein]-L-lysine = [E2 ubiquitin-conjugating enzyme]-L-cysteine + [acceptor protein]-N(6)-ubiquitinyl-L-lysine.. The protein operates within protein modification; protein ubiquitination. Its function is as follows. Might act as an E3 ubiquitin-protein ligase, or as part of E3 complex, which accepts ubiquitin from specific E2 ubiquitin-conjugating enzymes and then transfers it to substrates. This Arabidopsis thaliana (Mouse-ear cress) protein is Probable E3 ubiquitin-protein ligase ARI11 (ARI11).